We begin with the raw amino-acid sequence, 211 residues long: MRKGNEEKNYREEEYLQLPLDLIVEILKKLPLKSLVRFRCVSKQFSTIICSLRDFIESVVTRHLAQPGQQLPLLAVFHHCVPETFFTVSSSFSQSLKPAIYNPTTKRSVGLPEIGPPVTGFRKCNCLFGYDPVMDQYKVLSMVFDFRELTQTFHVFTLGQSQSWRRIQGINDGKLFPSAVGICIDGTFEFLRFKRDQDCLFCDNETQHIII.

An F-box domain is found at 12-59; it reads EEEYLQLPLDLIVEILKKLPLKSLVRFRCVSKQFSTIICSLRDFIESV.

The sequence is that of Putative F-box protein At1g52490 from Arabidopsis thaliana (Mouse-ear cress).